The following is a 27-amino-acid chain: Metallothionein-like protein CAP5 (27 aa).

The segment covering 1–18 (MAPCSCKSCGTSCAGSCT) has biased composition (low complexity). The disordered stretch occupies residues 1 to 27 (MAPCSCKSCGTSCAGSCTSCSCGSCSH). C4, C6, C9, C13, C20, C22, and C25 together coordinate Cu(+).

This sequence belongs to the metallothionein superfamily. Type 8 family.

The polypeptide is Metallothionein-like protein CAP5 (CAP5) (Colletotrichum gloeosporioides (Anthracnose fungus)).